Consider the following 90-residue polypeptide: DNA-directed RNA polymerase subunit omega (90 aa).

This sequence belongs to the RNA polymerase subunit omega family. As to quaternary structure, the RNAP catalytic core consists of 2 alpha, 1 beta, 1 beta' and 1 omega subunit. When a sigma factor is associated with the core the holoenzyme is formed, which can initiate transcription.

The catalysed reaction is RNA(n) + a ribonucleoside 5'-triphosphate = RNA(n+1) + diphosphate. In terms of biological role, promotes RNA polymerase assembly. Latches the N- and C-terminal regions of the beta' subunit thereby facilitating its interaction with the beta and alpha subunits. The polypeptide is DNA-directed RNA polymerase subunit omega (Alteromonas mediterranea (strain DSM 17117 / CIP 110805 / LMG 28347 / Deep ecotype)).